A 162-amino-acid chain; its full sequence is MSAAEGAVVFSEEKEALVLKSWAIMKKDSANLGLRFFLKIFEIAPSARQMFPFLRDSDVPLETNPKLKTHAVSVFVMTCEAAAQLRKAGKITVRETTLKRLGGTHLKYGVADGHFEVTRFALLETIKEALPADMWGPEMRNAWGEAYDQLVAAIKQEMKPAE.

The Globin domain occupies 9 to 159 (VFSEEKEALV…LVAAIKQEMK (151 aa)). A Homodimerization motif is present at residues 42 to 46 (EIAPS). Lysine 66, histidine 70, arginine 100, threonine 104, and histidine 105 together coordinate heme b. The short motif at 112 to 124 (DGHFEVTRFALLE) is the Homodimerization element.

This sequence belongs to the plant globin family. In terms of assembly, homodimer. Heme b serves as cofactor. Seeds and roots.

It localises to the cytoplasm. Its subcellular location is the nucleus. The catalysed reaction is Fe(III)-heme b-[protein] + nitric oxide + H2O = Fe(II)-heme b-[protein] + nitrite + 2 H(+). Functionally, phytoglobin that reduces nitrite to nitric oxide (NO) under anoxic conditions (e.g. during flooding or in waterlogged soil). May not function as an oxygen storage or transport protein. Has an unusually high affinity for O(2) through an hexacoordinate heme iron because of a very low dissociation constant. The sequence is that of Anaerobic nitrite reductase GLB1 from Hordeum vulgare (Barley).